The chain runs to 186 residues: ADP-ribosylation factor-like protein 8A (186 aa).

The segment at residues 1–19 (MIALFNKLLDWFKALFWKE) is an intramembrane region (note=Mediates targeting to membranes). Residues 29-35 (QYSGKTT), 71-75 (DIGGQ), and 130-133 (NKRD) each bind GTP.

The protein belongs to the small GTPase superfamily. Arf family. Interacts with PLEKHM1. When GTP-bound, interacts with RUFY3 and RUFY4, but not with RUFY1, nor RUFY2.

The protein resides in the late endosome membrane. Its subcellular location is the lysosome membrane. It localises to the cytoplasm. The protein localises to the cytoskeleton. It is found in the spindle. The protein resides in the cell projection. Its subcellular location is the axon. It localises to the synapse. Functionally, plays a role in lysosomes motility. In neurons, mediates the anterograde axonal long-range transport of presynaptic lysosome-related vesicles required for presynaptic biogenesis and synaptic function. May play a role in chromosome segregation. This is ADP-ribosylation factor-like protein 8A (Arl8a) from Mus musculus (Mouse).